Consider the following 120-residue polypeptide: Chaperonin GroEL (120 aa).

An ATP-binding site is contributed by 23–27 (DGTTT).

The protein belongs to the chaperonin (HSP60) family. Forms a cylinder of 14 subunits composed of two heptameric rings stacked back-to-back. Interacts with the co-chaperonin GroES.

Its subcellular location is the cytoplasm. The catalysed reaction is ATP + H2O + a folded polypeptide = ADP + phosphate + an unfolded polypeptide.. Together with its co-chaperonin GroES, plays an essential role in assisting protein folding. The GroEL-GroES system forms a nano-cage that allows encapsulation of the non-native substrate proteins and provides a physical environment optimized to promote and accelerate protein folding. The chain is Chaperonin GroEL from Mycolicibacter nonchromogenicus (Mycobacterium nonchromogenicum).